A 156-amino-acid polypeptide reads, in one-letter code: Small ribosomal subunit protein uS7c (156 aa).

It belongs to the universal ribosomal protein uS7 family. As to quaternary structure, part of the 30S ribosomal subunit.

The protein localises to the plastid. It is found in the chloroplast. One of the primary rRNA binding proteins, it binds directly to 16S rRNA where it nucleates assembly of the head domain of the 30S subunit. This chain is Small ribosomal subunit protein uS7c (rps7), found in Euglena gracilis.